A 393-amino-acid polypeptide reads, in one-letter code: Probable hydrolase sll0100 (393 aa).

The protein belongs to the peptidase M20 family.

The sequence is that of Probable hydrolase sll0100 from Synechocystis sp. (strain ATCC 27184 / PCC 6803 / Kazusa).